The sequence spans 93 residues: MVGKMADDMVKEQIYTIPLREVRKVPAWKRAGRAVKEVRGFLVRHMKTEAEQVKLDKTINECLWEKGCEKPPLSIRVRAVKFADGEVQAELAQ.

It belongs to the eukaryotic ribosomal protein eL31 family.

This Methanosarcina mazei (strain ATCC BAA-159 / DSM 3647 / Goe1 / Go1 / JCM 11833 / OCM 88) (Methanosarcina frisia) protein is Large ribosomal subunit protein eL31.